A 739-amino-acid chain; its full sequence is Double-strand break repair protein mus-23 (739 aa).

Mn(2+) is bound by residues D16, H18, D56, and N123. H124 functions as the Proton donor in the catalytic mechanism. Mn(2+) is bound by residues H212, H240, and H242. The interval F516 to G739 is disordered. Residues Q523–R532 show a composition bias toward basic residues. The span at V559–T568 shows a compositional bias: basic and acidic residues. Positions K599–K636 are enriched in low complexity. Positions A637–T646 are enriched in basic residues. Positions D650–P686 are enriched in acidic residues. Residues K694–R722 show a composition bias toward low complexity.

This sequence belongs to the MRE11/RAD32 family. As to quaternary structure, component of the MRN complex composed of two heterodimers RAD50 and MRE11 associated with a single NBS1. Requires Mn(2+) as cofactor.

The protein localises to the nucleus. It is found in the chromosome. Its subcellular location is the telomere. Core component of the MRN complex, which plays a central role in double-strand break (DSB) repair, DNA recombination, maintenance of telomere integrity and meiosis. The MRN complex is involved in the repair of DNA double-strand breaks (DSBs) via homologous recombination (HR), an error-free mechanism which primarily occurs during S and G2 phases. The complex (1) mediates the end resection of damaged DNA, which generates proper single-stranded DNA, a key initial steps in HR, and is (2) required for the recruitment of other repair factors and efficient activation of ATM and ATR upon DNA damage. Within the MRN complex, MRE11 possesses both single-strand endonuclease activity and double-strand-specific 3'-5' exonuclease activity. MRE11 first endonucleolytically cleaves the 5' strand at DNA DSB ends to prevent non-homologous end joining (NHEJ) and licence HR. It then generates a single-stranded DNA gap via 3' to 5' exonucleolytic degradation, which is required for single-strand invasion and recombination. The MRN complex is also required for the processing of R-loops. This chain is Double-strand break repair protein mus-23 (mus-23), found in Neurospora crassa (strain ATCC 24698 / 74-OR23-1A / CBS 708.71 / DSM 1257 / FGSC 987).